The chain runs to 445 residues: O-fucosyltransferase 23 (445 aa).

The helical; Signal-anchor for type II membrane protein transmembrane segment at 12–34 (IFSKSVACKCLVLVGIALFYRAL) threads the bilayer. Asn97 and Asn179 each carry an N-linked (GlcNAc...) asparagine glycan. Residue 258-260 (HMR) coordinates substrate. Residue Asn294 is glycosylated (N-linked (GlcNAc...) asparagine). 374-375 (TF) serves as a coordination point for substrate. Residue Asn424 is glycosylated (N-linked (GlcNAc...) asparagine).

It belongs to the glycosyltransferase GT106 family. In terms of tissue distribution, expressed in dry pollen grains and germinating pollen grains.

It localises to the golgi apparatus membrane. It functions in the pathway glycan metabolism. Its function is as follows. Probable protein O-fucosyltransferase required for correct pollen tube penetration through the stigma-style interface. May be involved in protein O-glycosylation events during pollen-pistil interactions. In Arabidopsis thaliana (Mouse-ear cress), this protein is O-fucosyltransferase 23.